The primary structure comprises 416 residues: D-amino acid dehydrogenase (416 aa).

FAD is bound at residue I3–Y17.

Belongs to the DadA oxidoreductase family. FAD is required as a cofactor.

The enzyme catalyses a D-alpha-amino acid + A + H2O = a 2-oxocarboxylate + AH2 + NH4(+). The protein operates within amino-acid degradation; D-alanine degradation; NH(3) and pyruvate from D-alanine: step 1/1. Functionally, oxidative deamination of D-amino acids. In Brucella canis (strain ATCC 23365 / NCTC 10854 / RM-666), this protein is D-amino acid dehydrogenase.